The following is a 29-amino-acid chain: Mycofactocin precursor peptide (29 aa).

The protein belongs to the mycofactocin precursor peptide family. In terms of processing, the post-translational modifications that lead to mycofactocin involve oxidative decarboxylation of the C-terminal tyrosine residue catalyzed by MftC, introduction of a tyramine-valine cross-link, removal of the modified C-terminal dipeptide by MftE. The released dipeptide then undergoes oxidative deamination by MftD, glycosylation by MftF and methylation by an unknown enzyme.

Precursor peptide that leads to mycofactocin (MFT) after extensive post-translational modifications by enzymes encoded by adjacent genes. Mycofactocin acts as a redox cofactor of nicotinamide-dependent oxidoreductases encoded in the same locus. The polypeptide is Mycofactocin precursor peptide (Mycobacterium tuberculosis (strain ATCC 25618 / H37Rv)).